A 124-amino-acid polypeptide reads, in one-letter code: Small ribosomal subunit protein uS11 (124 aa).

The protein belongs to the universal ribosomal protein uS11 family. Part of the 30S ribosomal subunit. Interacts with proteins S7 and S18. Binds to IF-3.

Functionally, located on the platform of the 30S subunit, it bridges several disparate RNA helices of the 16S rRNA. Forms part of the Shine-Dalgarno cleft in the 70S ribosome. This chain is Small ribosomal subunit protein uS11, found in Sulfurovum sp. (strain NBC37-1).